The primary structure comprises 299 residues: dTDP-4-dehydrorhamnose reductase (299 aa).

NADH is bound by residues 10 to 12 (GQV), D30, 39 to 40 (DF), and 63 to 65 (AHT). 11-12 (QV) is a binding site for NADPH. NADPH-binding positions include 39 to 40 (DF), 63 to 65 (AHT), and Y102. 104–105 (TD) is a binding site for dTDP-beta-L-rhamnose. Positions 128 and 132 each coordinate NADH. NADPH-binding residues include Y128 and K132. Y128 (proton donor/acceptor) is an active-site residue. W153 provides a ligand contact to dTDP-beta-L-rhamnose.

Belongs to the dTDP-4-dehydrorhamnose reductase family. As to quaternary structure, homodimer. The cofactor is Mg(2+).

It catalyses the reaction dTDP-beta-L-rhamnose + NADP(+) = dTDP-4-dehydro-beta-L-rhamnose + NADPH + H(+). It functions in the pathway carbohydrate biosynthesis; dTDP-L-rhamnose biosynthesis. The protein operates within bacterial outer membrane biogenesis; LPS O-antigen biosynthesis. In terms of biological role, involved in the biosynthesis of the dTDP-L-rhamnose which is an important component of lipopolysaccharide (LPS). Catalyzes the reduction of dTDP-6-deoxy-L-lyxo-4-hexulose to yield dTDP-L-rhamnose. RmlD uses NADH and NADPH nearly equally well. The polypeptide is dTDP-4-dehydrorhamnose reductase (rfbD) (Salmonella typhimurium (strain LT2 / SGSC1412 / ATCC 700720)).